The primary structure comprises 299 residues: Oxygen-dependent coproporphyrinogen-III oxidase (299 aa).

Ser-92 is a substrate binding site. Mn(2+) contacts are provided by His-96 and His-106. His-106 serves as the catalytic Proton donor. 108-110 (NVR) serves as a coordination point for substrate. The Mn(2+) site is built by His-145 and His-175. An important for dimerization region spans residues 240 to 275 (YVEFNLVWDRGTLFGLQTGGRTESILMSMPPLVRWE). 258 to 260 (GGR) serves as a coordination point for substrate.

This sequence belongs to the aerobic coproporphyrinogen-III oxidase family. In terms of assembly, homodimer. Mn(2+) serves as cofactor.

It localises to the cytoplasm. The enzyme catalyses coproporphyrinogen III + O2 + 2 H(+) = protoporphyrinogen IX + 2 CO2 + 2 H2O. It participates in porphyrin-containing compound metabolism; protoporphyrin-IX biosynthesis; protoporphyrinogen-IX from coproporphyrinogen-III (O2 route): step 1/1. Functionally, involved in the heme biosynthesis. Catalyzes the aerobic oxidative decarboxylation of propionate groups of rings A and B of coproporphyrinogen-III to yield the vinyl groups in protoporphyrinogen-IX. This chain is Oxygen-dependent coproporphyrinogen-III oxidase, found in Escherichia coli (strain K12 / MC4100 / BW2952).